The primary structure comprises 372 residues: Protein zntB (372 aa).

The next 3 helical transmembrane spans lie at 15–35 (LIMC…VIFI), 42–62 (LLGH…FMDL), and 70–90 (IGFY…AVIL). Residues 99–166 (ESGDSNHAHS…IAKSKNKKKS (68 aa)) are disordered. Over residues 114–124 (IEKHSSEKKEV) the composition is skewed to basic and acidic residues. Residues 133–167 (NGKDKKQKQQKQKQQKQQQQQKQNIAKSKNKKKSK) are a coiled coil. The span at 137–146 (KKQKQQKQKQ) shows a compositional bias: basic residues. The segment covering 147–159 (QKQQQQQKQNIAK) has biased composition (low complexity). Transmembrane regions (helical) follow at residues 170-192 (YLNS…EGVA), 207-229 (LMLA…IFSA), 237-257 (FKYC…FGLI), 271-291 (LAAV…PAAF), and 301-321 (FSNI…HSML). The tract at residues 328 to 372 (AGDGGHGHSHGGHGHSHGHGHSHGGHSHDSQHVESPQSSSFNAFA) is disordered. Residues 334-352 (GHSHGGHGHSHGHGHSHGG) are compositionally biased toward basic residues. The segment covering 360–372 (VESPQSSSFNAFA) has biased composition (polar residues).

It belongs to the ZIP transporter (TC 2.A.5) family. ZupT subfamily.

It localises to the membrane. Functionally, may transport divalent cations. May participate, with dstA, in the regulation of the differentiation of stalk cells during development. In Dictyostelium discoideum (Social amoeba), this protein is Protein zntB (zntB).